Reading from the N-terminus, the 574-residue chain is Adenine deaminase (574 aa).

Belongs to the metallo-dependent hydrolases superfamily. Adenine deaminase family. It depends on Mn(2+) as a cofactor.

The enzyme catalyses adenine + H2O + H(+) = hypoxanthine + NH4(+). The polypeptide is Adenine deaminase (Thermosipho africanus (strain TCF52B)).